Consider the following 201-residue polypeptide: Glycerol-3-phosphate acyltransferase (201 aa).

Transmembrane regions (helical) follow at residues 10–30 (MLIG…GLIL), 60–80 (LAAA…LIAA), 86–106 (AAIA…WIGF), 116–136 (LGVL…AWIV), and 166–186 (ALAA…RANI).

Belongs to the PlsY family. Probably interacts with PlsX.

Its subcellular location is the cell inner membrane. The enzyme catalyses an acyl phosphate + sn-glycerol 3-phosphate = a 1-acyl-sn-glycero-3-phosphate + phosphate. Its pathway is lipid metabolism; phospholipid metabolism. Its function is as follows. Catalyzes the transfer of an acyl group from acyl-phosphate (acyl-PO(4)) to glycerol-3-phosphate (G3P) to form lysophosphatidic acid (LPA). This enzyme utilizes acyl-phosphate as fatty acyl donor, but not acyl-CoA or acyl-ACP. The protein is Glycerol-3-phosphate acyltransferase of Brucella melitensis biotype 2 (strain ATCC 23457).